Reading from the N-terminus, the 575-residue chain is Proline--tRNA ligase 1 (575 aa).

Belongs to the class-II aminoacyl-tRNA synthetase family. ProS type 1 subfamily. In terms of assembly, homodimer.

Its subcellular location is the cytoplasm. It catalyses the reaction tRNA(Pro) + L-proline + ATP = L-prolyl-tRNA(Pro) + AMP + diphosphate. Functionally, catalyzes the attachment of proline to tRNA(Pro) in a two-step reaction: proline is first activated by ATP to form Pro-AMP and then transferred to the acceptor end of tRNA(Pro). As ProRS can inadvertently accommodate and process non-cognate amino acids such as alanine and cysteine, to avoid such errors it has two additional distinct editing activities against alanine. One activity is designated as 'pretransfer' editing and involves the tRNA(Pro)-independent hydrolysis of activated Ala-AMP. The other activity is designated 'posttransfer' editing and involves deacylation of mischarged Ala-tRNA(Pro). The misacylated Cys-tRNA(Pro) is not edited by ProRS. This chain is Proline--tRNA ligase 1, found in Anaeromyxobacter dehalogenans (strain 2CP-C).